Consider the following 195-residue polypeptide: MKVNHAEIVISAVSKKQYPEDQLPEIALAGRSNVGKSSFINRLINRKNLARTSSKPGKTQTLNFYRINESFYFVDVPGYGYAKVSKKEREKWGRMMEEYFQTRDTLRAVVLVTDLRHDPTQDDIQMYDFIKYFDLPVIIIGTKLDKITKNKRQKHINRAKQVLEMDETDLFIPFSAEIGEGKDEAWSALSRYIKR.

The EngB-type G domain occupies 22 to 195 (QLPEIALAGR…WSALSRYIKR (174 aa)). GTP contacts are provided by residues 30-37 (GRSNVGKS), 57-61 (GKTQT), 75-78 (DVPG), 142-145 (TKLD), and 174-176 (FSA). 2 residues coordinate Mg(2+): S37 and T59.

The protein belongs to the TRAFAC class TrmE-Era-EngA-EngB-Septin-like GTPase superfamily. EngB GTPase family. Requires Mg(2+) as cofactor.

Necessary for normal cell division and for the maintenance of normal septation. This Oceanobacillus iheyensis (strain DSM 14371 / CIP 107618 / JCM 11309 / KCTC 3954 / HTE831) protein is Probable GTP-binding protein EngB.